We begin with the raw amino-acid sequence, 168 residues long: Lipoprotein signal peptidase (168 aa).

4 consecutive transmembrane segments (helical) span residues 15-35, 47-67, 75-95, and 107-127; these read WLWLAILVFIADIGIKLVVMD, VLPFFNLLYVHNYGAAFSFLS, WLFTGIAFVVTGLLTYWMSKL, and ALIIGGAVGNVFDRVVHGFVV. Active-site residues include aspartate 128 and aspartate 146. Residues 141 to 161 form a helical membrane-spanning segment; sequence AFNLADTTICIGAAMIILDGF.

Belongs to the peptidase A8 family.

The protein localises to the cell inner membrane. The enzyme catalyses Release of signal peptides from bacterial membrane prolipoproteins. Hydrolyzes -Xaa-Yaa-Zaa-|-(S,diacylglyceryl)Cys-, in which Xaa is hydrophobic (preferably Leu), and Yaa (Ala or Ser) and Zaa (Gly or Ala) have small, neutral side chains.. It functions in the pathway protein modification; lipoprotein biosynthesis (signal peptide cleavage). In terms of biological role, this protein specifically catalyzes the removal of signal peptides from prolipoproteins. This chain is Lipoprotein signal peptidase, found in Vibrio campbellii (strain ATCC BAA-1116).